Here is a 234-residue protein sequence, read N- to C-terminus: Phosphoribosylformylglycinamidine synthase subunit PurQ (234 aa).

The region spanning valine 6–valine 234 is the Glutamine amidotransferase type-1 domain. The Nucleophile role is filled by cysteine 89. Catalysis depends on residues histidine 206 and glutamate 208.

In terms of assembly, part of the FGAM synthase complex composed of 1 PurL, 1 PurQ and 2 PurS subunits.

The protein resides in the cytoplasm. It carries out the reaction N(2)-formyl-N(1)-(5-phospho-beta-D-ribosyl)glycinamide + L-glutamine + ATP + H2O = 2-formamido-N(1)-(5-O-phospho-beta-D-ribosyl)acetamidine + L-glutamate + ADP + phosphate + H(+). The enzyme catalyses L-glutamine + H2O = L-glutamate + NH4(+). It participates in purine metabolism; IMP biosynthesis via de novo pathway; 5-amino-1-(5-phospho-D-ribosyl)imidazole from N(2)-formyl-N(1)-(5-phospho-D-ribosyl)glycinamide: step 1/2. Part of the phosphoribosylformylglycinamidine synthase complex involved in the purines biosynthetic pathway. Catalyzes the ATP-dependent conversion of formylglycinamide ribonucleotide (FGAR) and glutamine to yield formylglycinamidine ribonucleotide (FGAM) and glutamate. The FGAM synthase complex is composed of three subunits. PurQ produces an ammonia molecule by converting glutamine to glutamate. PurL transfers the ammonia molecule to FGAR to form FGAM in an ATP-dependent manner. PurS interacts with PurQ and PurL and is thought to assist in the transfer of the ammonia molecule from PurQ to PurL. In Chlorobium chlorochromatii (strain CaD3), this protein is Phosphoribosylformylglycinamidine synthase subunit PurQ.